We begin with the raw amino-acid sequence, 311 residues long: 4-hydroxy-tetrahydrodipicolinate synthase (311 aa).

Thr51 is a pyruvate binding site. Tyr140 functions as the Proton donor/acceptor in the catalytic mechanism. The active-site Schiff-base intermediate with substrate is the Lys168. Ile209 is a binding site for pyruvate.

This sequence belongs to the DapA family. In terms of assembly, homotetramer; dimer of dimers.

The protein localises to the cytoplasm. The enzyme catalyses L-aspartate 4-semialdehyde + pyruvate = (2S,4S)-4-hydroxy-2,3,4,5-tetrahydrodipicolinate + H2O + H(+). Its pathway is amino-acid biosynthesis; L-lysine biosynthesis via DAP pathway; (S)-tetrahydrodipicolinate from L-aspartate: step 3/4. Its function is as follows. Catalyzes the condensation of (S)-aspartate-beta-semialdehyde [(S)-ASA] and pyruvate to 4-hydroxy-tetrahydrodipicolinate (HTPA). This chain is 4-hydroxy-tetrahydrodipicolinate synthase, found in Streptococcus suis (strain 98HAH33).